A 48-amino-acid polypeptide reads, in one-letter code: uncharacterized protein (48 aa).

Positions methionine 1–proline 48 are disordered. Over residues proline 21 to glycine 36 the composition is skewed to low complexity. Positions glutamine 37–proline 48 are enriched in gly residues.

This is an uncharacterized protein from Dictyostelium discoideum (Social amoeba).